A 509-amino-acid chain; its full sequence is ATP synthase subunit alpha (509 aa).

Residue 169 to 176 coordinates ATP; it reads GDRQTGKT.

Belongs to the ATPase alpha/beta chains family. F-type ATPases have 2 components, CF(1) - the catalytic core - and CF(0) - the membrane proton channel. CF(1) has five subunits: alpha(3), beta(3), gamma(1), delta(1), epsilon(1). CF(0) has three main subunits: a(1), b(2) and c(9-12). The alpha and beta chains form an alternating ring which encloses part of the gamma chain. CF(1) is attached to CF(0) by a central stalk formed by the gamma and epsilon chains, while a peripheral stalk is formed by the delta and b chains.

The protein resides in the cell inner membrane. The catalysed reaction is ATP + H2O + 4 H(+)(in) = ADP + phosphate + 5 H(+)(out). Functionally, produces ATP from ADP in the presence of a proton gradient across the membrane. The alpha chain is a regulatory subunit. The protein is ATP synthase subunit alpha of Parvibaculum lavamentivorans (strain DS-1 / DSM 13023 / NCIMB 13966).